Here is a 263-residue protein sequence, read N- to C-terminus: Undecaprenyl-diphosphatase (263 aa).

8 helical membrane-spanning segments follow: residues 1-21, 41-61, 69-89, 96-116, 147-167, 177-197, 208-228, and 238-258; these read MSYLHAIILGIVEGITEFLPI, FTKAFEVIIQFGAIMSVLVLY, WGFYRKLFVAFLPTAIIGFVV, LMGSVQVVAWSLIIGGVILIW, AIAMIPGVSRSGATIMGGLTL, FSFFLAVPTMAAATLYKLLKI, LLLVGCAVAFVVAMIAIKFFI, and GFGYYRIVLGLVILILLYTGH.

This sequence belongs to the UppP family.

The protein resides in the cell inner membrane. It carries out the reaction di-trans,octa-cis-undecaprenyl diphosphate + H2O = di-trans,octa-cis-undecaprenyl phosphate + phosphate + H(+). Functionally, catalyzes the dephosphorylation of undecaprenyl diphosphate (UPP). Confers resistance to bacitracin. In Bdellovibrio bacteriovorus (strain ATCC 15356 / DSM 50701 / NCIMB 9529 / HD100), this protein is Undecaprenyl-diphosphatase.